We begin with the raw amino-acid sequence, 559 residues long: Amino-acid acetyltransferase, mitochondrial (559 aa).

The interval 162–188 is disordered; that stretch reads RLGPKPGSEDPTSELDFTPPETHTLPP. One can recognise an N-acetyltransferase domain in the interval 362 to 538; that stretch reads LPVQVFHSVS…GSAGLSYVED (177 aa).

This sequence belongs to the acetyltransferase family.

It is found in the mitochondrion. The catalysed reaction is L-glutamate + acetyl-CoA = N-acetyl-L-glutamate + CoA + H(+). Its pathway is amino-acid biosynthesis; L-arginine biosynthesis; N(2)-acetyl-L-ornithine from L-glutamate: step 1/4. N-acetylglutamate synthase involved in arginine biosynthesis. The chain is Amino-acid acetyltransferase, mitochondrial (ARG2) from Laccaria bicolor (strain S238N-H82 / ATCC MYA-4686) (Bicoloured deceiver).